Reading from the N-terminus, the 4043-residue chain is Hybrid PKS-NRPS synthetase thnA (4043 aa).

Residues 6-440 (LEPIAIVGSA…GSNAHAILEE (435 aa)) form the Ketosynthase family 3 (KS3) domain. Residues C179, H319, and H360 each act as for beta-ketoacyl synthase activity in the active site. Residues 558 to 894 (VFTGQGAQWA…FSDALGFVWT (337 aa)) form a malonyl-CoA:ACP transacylase (MAT) domain region. The interval 952-1090 (HEILGTILPE…ATVKIILGTP (139 aa)) is N-terminal hotdog fold. Residues 952–1256 (HEILGTILPE…LSIKTFAPAT (305 aa)) are dehydratase (DH) domain. In terms of domain architecture, PKS/mFAS DH spans 952–1258 (HEILGTILPE…IKTFAPATQA (307 aa)). The active-site Proton acceptor; for dehydratase activity is H984. Residues 1105-1258 (LFPIDADRFY…IKTFAPATQA (154 aa)) are C-terminal hotdog fold. Residue D1166 is the Proton donor; for dehydratase activity of the active site. The interval 1417–1591 (LASMMKQITH…RKAGFAGVDA (175 aa)) is methyltransferase (MT) domain. Positions 2146–2320 (TYLLVGLTGK…GSTFDIGQVA (175 aa)) are ketoreductase (KR) domain. One can recognise a Carrier 1 domain in the interval 2434 to 2512 (EQALDILKEC…ELCDRVVDKL (79 aa)). At S2472 the chain carries O-(pantetheine 4'-phosphoryl)serine. Residues 2521 to 2618 (GKQGESQPPA…PPPPEPAVER (98 aa)) form a disordered region. A compositionally biased stretch (low complexity) spans 2527–2536 (QPPASTAQPQ). A compositionally biased stretch (pro residues) spans 2537–2547 (PVAPKPKPLPV). Residues 2578–2605 (YSATEASTRSGSPSEATRLSQKVSSKLQ) are compositionally biased toward polar residues. A condensation (C) domain region spans residues 2626–3067 (IKSVPISLGQ…IPRFSEKQLA (442 aa)). The interval 3092 to 3496 (QVARENPDKV…GTMVFHSRMA (405 aa)) is adenylation (A) domain. The Carrier 2 domain maps to 3614–3695 (TELTETMIQL…EMAQKVEETI (82 aa)). S3655 carries the O-(pantetheine 4'-phosphoryl)serine modification. A reductase (R) domain region spans residues 3736 to 3954 (ITGATGFLSK…DMLPAVLTAQ (219 aa)).

The protein in the C-terminal section; belongs to the NRP synthetase family.

The enzyme catalyses malate + 6 malonyl-CoA + acetyl-CoA + 2 AH2 + 2 S-adenosyl-L-methionine + 5 NADPH + 9 H(+) = trihazone A + 2 A + 2 S-adenosyl-L-homocysteine + 6 CO2 + 5 NADP(+) + 7 CoA + 6 H2O. It functions in the pathway secondary metabolite biosynthesis. Its function is as follows. Hybrid PKS-NRPS synthetase; part of the gene cluster that produces the tetronate natural products trihazones. The PKS-NRPS synthetase thnA with the help of the trans-enoyl reductase thnE are responsible for the synthesis of the carboxylmethyl containing trihazone A. The PKS portion of thnA synthesizes beta-keto-triene chain from one acetyl-CoA and 6 equivalents of malonyl-CoA, in collaboration with thnE, which selectively reduces the enoyl intermediate during the first and fourth iteration of the PKS. The NRPS domain selects and activates malate, of which the alpha-hydroxyl group attacks the completed polyketide acyl-S-ACP chain to form the ester product. Intramolecular Dieckmann cyclization catalyzed by the terminal reductase domain releases the product as trihazone A from the PKS-NPRS. The pathway begins with the formation of trihazone A by the hybrid PKS-NRPS synthetase thnA and the trans-enoyl reductase thnE. Trihazone A is further decarboxylated by the 2-oxoglutarate-dependent dioxygenase thnC to produce trihazone D. The function of the FAD-dependent monooxygenase thnD has still to be identified. This chain is Hybrid PKS-NRPS synthetase thnA, found in Trichoderma harzianum (Hypocrea lixii).